Consider the following 608-residue polypeptide: Nuclear receptor subfamily 2 group C member 1 (608 aa).

A required for interaction with KAT2B region spans residues 1–179 (MASIEEIAHQ…RLQRCIAFGM (179 aa)). Positions 111–186 (FDLCVVCGDK…FGMKQDSVQC (76 aa)) form a DNA-binding region, nuclear receptor. 2 consecutive NR C4-type zinc fingers follow at residues 114–134 (CVVC…CEGC) and 150–169 (CRGS…CQYC). Phosphoserine occurs at positions 198 and 216. Residue Thr221 is modified to Phosphothreonine. Residue Thr223 is modified to Phosphothreonine; by MAPK1. Lys251 participates in a covalent cross-link: Glycyl lysine isopeptide (Lys-Gly) (interchain with G-Cter in SUMO); alternate. A Glycyl lysine isopeptide (Lys-Gly) (interchain with G-Cter in SUMO2); alternate cross-link involves residue Lys251. The region spanning 353–595 (GNVHLIAGDS…SVIPHILKME (243 aa)) is the NR LBD domain. Ser586 bears the Phosphoserine; by PKC mark. Positions 589–608 (PHILKMEPADYNSQIIGHSI) are required for interaction with NRIP1. Residue Lys593 forms a Glycyl lysine isopeptide (Lys-Gly) (interchain with G-Cter in SUMO2) linkage.

Belongs to the nuclear hormone receptor family. NR2 subfamily. Homodimer. Heterodimer; with NR2C2 which is required for chromatin remodeling and for binding to promoter regions such as globin DR1 repeats. Interacts with ESR1; the interaction prevents homodimerization of ESR1 and suppresses its transcriptional activity and cell growth. Interacts with NRIP1 (via its LXXLL motifs); the interaction provides corepressor activity. Interacts with HDAC3 (via the DNA-binding domain); the interaction recruits phosphorylated NR2C1 to PML bodies for sumoylation. Interacts with HDAC4 (via the DNA-binding domain). Interacts with PIAS1; the interaction is required for sumoylation of NR2C1. Interacts with UBE2I; the interaction is required for sumoylation of NR2C1. Interacts with KAT2B; the interaction acts as a corepressor of gene expression. Post-translationally, sumoylation requires both PIAS1 and UBE2I. Sumoylation appears to dissociate NR2C1 from the PML nuclear bodies. Enhances the interaction with NRIP1 but inhibits interaction with KAT2B. In proliferating cells, stimulation by all-trans retinoic acid, activation of MAPK1-mediated phosphorylation and recruitment to PML bodies with subsequent sumoylation, suppresses OCT4 expression. Phosphorylated on several serine and threonine residues. Phosphorylation on Thr-223, stimulated by all-trans retinoic acid (atRA) mediates PML location and sumoylation in proliferating cells which then modulates its association with effector molecules, KAT2B and NRIP1. Phosphorylation on Ser-586 by PKC is important for protein stability and function as activator of RARB.

It localises to the nucleus. The protein resides in the PML body. In terms of biological role, orphan nuclear receptor. Binds the IR7 element in the promoter of its own gene in an autoregulatory negative feedback mechanism. Primarily repressor of a broad range of genes including ESR1 and RARB. Together with NR2C2, forms the core of the DRED (direct repeat erythroid-definitive) complex that represses embryonic and fetal globin transcription. Binds to hormone response elements (HREs) consisting of two 5'-AGGTCA-3' half site direct repeat consensus sequences. Also activator of OCT4 gene expression. Plays a fundamental role in early embryogenesis and regulates embryonic stem cell proliferation and differentiation. Mediator of retinoic acid-regulated preadipocyte proliferation. This chain is Nuclear receptor subfamily 2 group C member 1 (NR2C1), found in Bos taurus (Bovine).